A 266-amino-acid polypeptide reads, in one-letter code: Zinc transport system ATP-binding protein TroB (266 aa).

The ABC transporter domain maps to 11–243; it reads VQVDDLTLAY…YVQRAYGGRI (233 aa). 43–50 contributes to the ATP binding site; sequence GPNGAGKS.

The protein belongs to the ABC transporter superfamily.

Part of an ATP-driven transport system TroABCD for zinc. The sequence is that of Zinc transport system ATP-binding protein TroB (troB) from Treponema pallidum (strain Nichols).